The following is a 225-amino-acid chain: Uracil-DNA glycosylase (225 aa).

The Proton acceptor role is filled by D64.

It belongs to the uracil-DNA glycosylase (UDG) superfamily. UNG family.

It is found in the cytoplasm. The enzyme catalyses Hydrolyzes single-stranded DNA or mismatched double-stranded DNA and polynucleotides, releasing free uracil.. Functionally, excises uracil residues from the DNA which can arise as a result of misincorporation of dUMP residues by DNA polymerase or due to deamination of cytosine. This is Uracil-DNA glycosylase from Agathobacter rectalis (strain ATCC 33656 / DSM 3377 / JCM 17463 / KCTC 5835 / VPI 0990) (Eubacterium rectale).